The primary structure comprises 571 residues: Septation ring formation regulator EzrA (571 aa).

Residues 1–3 (MYY) lie on the Extracellular side of the membrane. Residues 4 to 22 (MLIGFIIVVIAVIGAGYIL) traverse the membrane as a helical segment. Topologically, residues 23-571 (KRKHYQRINE…ESKVSVDDIE (549 aa)) are cytoplasmic. 4 coiled-coil regions span residues 248-298 (LAQM…DTLE), 326-374 (DALA…ASGE), 400-437 (KFAE…ERER), and 478-529 (RIAE…ENHF).

Belongs to the EzrA family.

It is found in the cell membrane. Its function is as follows. Negative regulator of FtsZ ring formation; modulates the frequency and position of FtsZ ring formation. Inhibits FtsZ ring formation at polar sites. Interacts either with FtsZ or with one of its binding partners to promote depolymerization. This is Septation ring formation regulator EzrA from Listeria monocytogenes serovar 1/2a (strain ATCC BAA-679 / EGD-e).